Consider the following 1025-residue polypeptide: Beta-galactosidase (1025 aa).

The active-site Proton donor is the glutamate 482. The active-site Nucleophile is the glutamate 551.

Belongs to the glycosyl hydrolase 2 family.

It catalyses the reaction Hydrolysis of terminal non-reducing beta-D-galactose residues in beta-D-galactosides.. The polypeptide is Beta-galactosidase (LAC4) (Kluyveromyces lactis (strain ATCC 8585 / CBS 2359 / DSM 70799 / NBRC 1267 / NRRL Y-1140 / WM37) (Yeast)).